Here is a 204-residue protein sequence, read N- to C-terminus: Urease accessory protein UreG (204 aa).

12–19 (GPVGSGKT) lines the GTP pocket.

The protein belongs to the SIMIBI class G3E GTPase family. UreG subfamily. As to quaternary structure, homodimer. UreD, UreF and UreG form a complex that acts as a GTP-hydrolysis-dependent molecular chaperone, activating the urease apoprotein by helping to assemble the nickel containing metallocenter of UreC. The UreE protein probably delivers the nickel.

It localises to the cytoplasm. In terms of biological role, facilitates the functional incorporation of the urease nickel metallocenter. This process requires GTP hydrolysis, probably effectuated by UreG. This Streptococcus salivarius (strain 57.I) protein is Urease accessory protein UreG.